The chain runs to 299 residues: CRISPR-associated endonuclease Cas1 3 (299 aa).

Mn(2+)-binding residues include Glu143, His210, and Asp223.

The protein belongs to the CRISPR-associated endonuclease Cas1 family. In terms of assembly, homodimer, forms a heterotetramer with a Cas2 homodimer. Mg(2+) serves as cofactor. Requires Mn(2+) as cofactor.

In terms of biological role, CRISPR (clustered regularly interspaced short palindromic repeat), is an adaptive immune system that provides protection against mobile genetic elements (viruses, transposable elements and conjugative plasmids). CRISPR clusters contain spacers, sequences complementary to antecedent mobile elements, and target invading nucleic acids. CRISPR clusters are transcribed and processed into CRISPR RNA (crRNA). Acts as a dsDNA endonuclease. Involved in the integration of spacer DNA into the CRISPR cassette. In Methanospirillum hungatei JF-1 (strain ATCC 27890 / DSM 864 / NBRC 100397 / JF-1), this protein is CRISPR-associated endonuclease Cas1 3.